A 304-amino-acid chain; its full sequence is MKMLRRTKVNFSKLLYKITKLAIVLTILYIYFTPKIVSRNNASLQHIFPHKYGDYEINLVIAHPDDEVMFFSPIISQLNSYFPRTVPFNIICLSKGNAEGLGETRVRELNESAALLLHNERAVSVQVMDFQDGMDEIWDIDSITSSLSQKIDIKNHNLNQIIVTFDSYGVSNHINHKSCYAAVKKLVDDYAQPKTKRNEQPPHVTALYLRSYKNNIVLKYNSFIWEILKILYDLISPFRRIIQALPPNTAAEKDKLSLMNTHAQYVLAFATMLNAHESQVVWFRYGWWIFSRFVFVNEFDVYTY.

Topologically, residues 1 to 20 (MKMLRRTKVNFSKLLYKITK) are lumenal. A helical membrane pass occupies residues 21–38 (LAIVLTILYIYFTPKIVS). Residues 39–304 (RNNASLQHIF…FVNEFDVYTY (266 aa)) lie on the Cytoplasmic side of the membrane.

It belongs to the PIGL family.

It is found in the endoplasmic reticulum membrane. It carries out the reaction a 6-(N-acetyl-alpha-D-glucosaminyl)-1-(1,2-diacyl-sn-glycero-3-phospho)-1D-myo-inositol + H2O = a 6-(alpha-D-glucosaminyl)-1-(1,2-diacyl-sn-glycero-3-phospho)-1D-myo-inositol + acetate. Its pathway is glycolipid biosynthesis; glycosylphosphatidylinositol-anchor biosynthesis. Functionally, involved in the second step of GPI biosynthesis. De-N-acetylation of N-acetylglucosaminyl-phosphatidylinositol. This is N-acetylglucosaminyl-phosphatidylinositol de-N-acetylase (GPI12) from Saccharomyces cerevisiae (strain ATCC 204508 / S288c) (Baker's yeast).